Consider the following 426-residue polypeptide: MVLLPEKPVWMSQQQYEEQYGSLLKLKESEKCNHEDKQLALQPKESSIGYSTQERIAKLSVPEVQDDDKNSKVRNRKHQRFDLEEKKKKLRLQKTIEEQIKHHDIEMTANRVVNVDHVVRQHYNERTFLSKKHNRNYSPIIKLRNFNNAIKYILIDKFTRAGDVVLELACGKGGDLRKYGAAGISQFIGIDISNASITEALKRYHSMKNLEYQVILITGDCFGESLGVAVESFPECRFPCDIVSCQFALHYAFETEEKARRMLLNVVKSLKIGGYFFGTIPDSEFIRYKMNKIPESVEKPSWGNSIYKVTFSNNEYQKNGNEFPSPFGQMYTFWLEDAIDNVPEYVIPFESFRSLADEYGMELELQKGFNEFFVEEIPNWVNRFSPKMREGLKRSDGRYGVEGVEKEPAAYFYTTFAFRKVRDYQE.

An mRNA cap 0 methyltransferase domain is found at 138–421 (SPIIKLRNFN…FYTTFAFRKV (284 aa)). 147 to 148 (NN) is a binding site for mRNA. S-adenosyl-L-methionine-binding residues include lysine 151, alanine 169, aspartate 191, aspartate 220, glutamine 246, and tyrosine 251.

It belongs to the class I-like SAM-binding methyltransferase superfamily. mRNA cap 0 methyltransferase family.

Its subcellular location is the nucleus. The enzyme catalyses a 5'-end (5'-triphosphoguanosine)-ribonucleoside in mRNA + S-adenosyl-L-methionine = a 5'-end (N(7)-methyl 5'-triphosphoguanosine)-ribonucleoside in mRNA + S-adenosyl-L-homocysteine. In terms of biological role, responsible for methylating the 5'-cap structure of mRNAs. The protein is mRNA cap guanine-N(7) methyltransferase (ABD1) of Kluyveromyces lactis (strain ATCC 8585 / CBS 2359 / DSM 70799 / NBRC 1267 / NRRL Y-1140 / WM37) (Yeast).